Consider the following 249-residue polypeptide: Probable transcriptional regulatory protein mll3945 (249 aa).

This sequence belongs to the TACO1 family.

The protein resides in the cytoplasm. The sequence is that of Probable transcriptional regulatory protein mll3945 from Mesorhizobium japonicum (strain LMG 29417 / CECT 9101 / MAFF 303099) (Mesorhizobium loti (strain MAFF 303099)).